A 365-amino-acid chain; its full sequence is Phosphoserine aminotransferase (365 aa).

An L-glutamate-binding site is contributed by R40. Pyridoxal 5'-phosphate contacts are provided by residues 74–75 (AS), F99, T155, D177, and Q200. K201 bears the N6-(pyridoxal phosphate)lysine mark. 241 to 242 (NT) serves as a coordination point for pyridoxal 5'-phosphate.

This sequence belongs to the class-V pyridoxal-phosphate-dependent aminotransferase family. SerC subfamily. As to quaternary structure, homodimer. Pyridoxal 5'-phosphate is required as a cofactor.

It is found in the cytoplasm. The catalysed reaction is O-phospho-L-serine + 2-oxoglutarate = 3-phosphooxypyruvate + L-glutamate. The enzyme catalyses 4-(phosphooxy)-L-threonine + 2-oxoglutarate = (R)-3-hydroxy-2-oxo-4-phosphooxybutanoate + L-glutamate. The protein operates within amino-acid biosynthesis; L-serine biosynthesis; L-serine from 3-phospho-D-glycerate: step 2/3. In terms of biological role, catalyzes the reversible conversion of 3-phosphohydroxypyruvate to phosphoserine and of 3-hydroxy-2-oxo-4-phosphonooxybutanoate to phosphohydroxythreonine. The polypeptide is Phosphoserine aminotransferase (Lactococcus lactis subsp. cremoris (strain SK11)).